We begin with the raw amino-acid sequence, 227 residues long: PKHD-type hydroxylase PHZ_c0292 (227 aa).

The 101-residue stretch at 78-178 (VVFPPLFNRY…RVCSFFWIQS (101 aa)) folds into the Fe2OG dioxygenase domain. H96, D98, and H159 together coordinate Fe cation. A 2-oxoglutarate-binding site is contributed by R169.

Requires Fe(2+) as cofactor. The cofactor is L-ascorbate.

This is PKHD-type hydroxylase PHZ_c0292 from Phenylobacterium zucineum (strain HLK1).